Here is a 72-residue protein sequence, read N- to C-terminus: Small, acid-soluble spore protein 1 (72 aa).

This sequence belongs to the alpha/beta-type SASP family.

SASP are bound to spore DNA. They are double-stranded DNA-binding proteins that cause DNA to change to an a-like conformation. They protect the DNA backbone from chemical and enzymatic cleavage and are thus involved in dormant spore's high resistance to UV light. The chain is Small, acid-soluble spore protein 1 (Sh-1) from Halobacillus halophilus (strain ATCC 35676 / DSM 2266 / JCM 20832 / KCTC 3685 / LMG 17431 / NBRC 102448 / NCIMB 2269) (Sporosarcina halophila).